A 435-amino-acid polypeptide reads, in one-letter code: Trigger factor (435 aa).

Residues 164–249 form the PPIase FKBP-type domain; sequence GDFAKFDFEG…LHEIQGKKAG (86 aa).

This sequence belongs to the FKBP-type PPIase family. Tig subfamily.

It is found in the cytoplasm. The catalysed reaction is [protein]-peptidylproline (omega=180) = [protein]-peptidylproline (omega=0). In terms of biological role, involved in protein export. Acts as a chaperone by maintaining the newly synthesized protein in an open conformation. Functions as a peptidyl-prolyl cis-trans isomerase. This Campylobacter fetus subsp. fetus (strain 82-40) protein is Trigger factor.